The primary structure comprises 216 residues: LHFPL tetraspan subfamily member 3 protein (216 aa).

The next 4 helical transmembrane spans lie at 22-42 (IGVL…VCFV), 96-116 (FFIG…ALFF), 126-146 (ICGW…MIYP), and 177-197 (ILAI…FVLG).

The protein belongs to the LHFP family.

It localises to the membrane. The chain is LHFPL tetraspan subfamily member 3 protein from Danio rerio (Zebrafish).